The sequence spans 218 residues: Oxygen regulatory protein NreC (218 aa).

Residues 2–119 (KIVIADDHAV…QLILAVRTVY (118 aa)) form the Response regulatory domain. Position 53 is a 4-aspartylphosphate (Asp-53). Residues 149–214 (SSDPFKILSK…ELVEYALKKK (66 aa)) form the HTH luxR-type domain. The H-T-H motif DNA-binding region spans 173–192 (NKDIAEKLFVSVKTVEAHKT).

Post-translationally, phosphorylated by NreB.

It localises to the cytoplasm. Its function is as follows. Member of the two-component regulatory system NreB/NreC involved in the control of dissimilatory nitrate/nitrite reduction in response to oxygen. Phosphorylated NreC binds to a GC-rich palindromic sequence at the promoters of the nitrate (narGHJI) and nitrite (nir) reductase operons, as well as the putative nitrate transporter gene narT, and activates their expression. This chain is Oxygen regulatory protein NreC (nreC), found in Staphylococcus epidermidis (strain ATCC 35984 / DSM 28319 / BCRC 17069 / CCUG 31568 / BM 3577 / RP62A).